Consider the following 345-residue polypeptide: Glycerol-3-phosphate dehydrogenase [NAD(P)+] (345 aa).

Positions 11, 12, 32, 33, and 106 each coordinate NADPH. Sn-glycerol 3-phosphate-binding residues include K106, G137, and S139. Residue A141 participates in NADPH binding. K192, D245, S255, R256, and N257 together coordinate sn-glycerol 3-phosphate. The active-site Proton acceptor is K192. R256 contacts NADPH. NADPH is bound by residues V280 and E282.

It belongs to the NAD-dependent glycerol-3-phosphate dehydrogenase family.

It localises to the cytoplasm. The catalysed reaction is sn-glycerol 3-phosphate + NAD(+) = dihydroxyacetone phosphate + NADH + H(+). It catalyses the reaction sn-glycerol 3-phosphate + NADP(+) = dihydroxyacetone phosphate + NADPH + H(+). It functions in the pathway membrane lipid metabolism; glycerophospholipid metabolism. Its function is as follows. Catalyzes the reduction of the glycolytic intermediate dihydroxyacetone phosphate (DHAP) to sn-glycerol 3-phosphate (G3P), the key precursor for phospholipid synthesis. The chain is Glycerol-3-phosphate dehydrogenase [NAD(P)+] from Bacillus velezensis (strain DSM 23117 / BGSC 10A6 / LMG 26770 / FZB42) (Bacillus amyloliquefaciens subsp. plantarum).